Here is a 351-residue protein sequence, read N- to C-terminus: Cytochrome c biogenesis protein CcsA (351 aa).

8 consecutive transmembrane segments (helical) span residues 12–32, 37–57, 68–88, 97–117, 143–163, 259–279, 294–314, and 320–340; these read NISF…AAFP, LSIL…TLLG, ISNL…IHLI, LVGV…ALTL, MMLS…FLII, IIGL…VWAN, WALI…TKGW, and AILA…VNLL.

This sequence belongs to the CcmF/CycK/Ccl1/NrfE/CcsA family. In terms of assembly, may interact with ccs1.

The protein localises to the cellular thylakoid membrane. Its function is as follows. Required during biogenesis of c-type cytochromes (cytochrome c6 and cytochrome f) at the step of heme attachment. The polypeptide is Cytochrome c biogenesis protein CcsA (Trichodesmium erythraeum (strain IMS101)).